A 91-amino-acid chain; its full sequence is Ragulator complex protein LAMTOR5 homolog (91 aa).

It belongs to the LAMTOR5 family. Part of the Ragulator complex.

It localises to the cytoplasm. It is found in the lysosome. Its function is as follows. Regulator of the TOR pathway, a signaling cascade that promotes cell growth in response to growth factors, energy levels, and amino acids. As part of the Ragulator complex, may activate the TOR signaling cascade in response to amino acids. The polypeptide is Ragulator complex protein LAMTOR5 homolog (Nematostella vectensis (Starlet sea anemone)).